Reading from the N-terminus, the 887-residue chain is Alanine--tRNA ligase (887 aa).

His-565, His-569, Cys-674, and His-678 together coordinate Zn(2+).

This sequence belongs to the class-II aminoacyl-tRNA synthetase family. Zn(2+) is required as a cofactor.

It is found in the cytoplasm. It carries out the reaction tRNA(Ala) + L-alanine + ATP = L-alanyl-tRNA(Ala) + AMP + diphosphate. Its function is as follows. Catalyzes the attachment of alanine to tRNA(Ala) in a two-step reaction: alanine is first activated by ATP to form Ala-AMP and then transferred to the acceptor end of tRNA(Ala). Also edits incorrectly charged Ser-tRNA(Ala) and Gly-tRNA(Ala) via its editing domain. The polypeptide is Alanine--tRNA ligase (Erythrobacter litoralis (strain HTCC2594)).